A 470-amino-acid polypeptide reads, in one-letter code: ATP synthase subunit beta (470 aa).

158-165 (GGAGVGKT) serves as a coordination point for ATP.

This sequence belongs to the ATPase alpha/beta chains family. F-type ATPases have 2 components, CF(1) - the catalytic core - and CF(0) - the membrane proton channel. CF(1) has five subunits: alpha(3), beta(3), gamma(1), delta(1), epsilon(1). CF(0) has three main subunits: a(1), b(2) and c(9-12). The alpha and beta chains form an alternating ring which encloses part of the gamma chain. CF(1) is attached to CF(0) by a central stalk formed by the gamma and epsilon chains, while a peripheral stalk is formed by the delta and b chains.

The protein localises to the cell membrane. It carries out the reaction ATP + H2O + 4 H(+)(in) = ADP + phosphate + 5 H(+)(out). Its function is as follows. Produces ATP from ADP in the presence of a proton gradient across the membrane. The catalytic sites are hosted primarily by the beta subunits. The chain is ATP synthase subunit beta from Alkalihalophilus pseudofirmus (strain ATCC BAA-2126 / JCM 17055 / OF4) (Bacillus pseudofirmus).